A 191-amino-acid chain; its full sequence is Ribosome maturation factor RimP (191 aa).

It belongs to the RimP family.

The protein resides in the cytoplasm. Functionally, required for maturation of 30S ribosomal subunits. This Caulobacter vibrioides (strain NA1000 / CB15N) (Caulobacter crescentus) protein is Ribosome maturation factor RimP.